A 950-amino-acid chain; its full sequence is Leucine--tRNA ligase (950 aa).

The 'HIGH' region signature appears at 72–83 (PYPSGEGLHVGH). The 'KMSKS' region signature appears at 722 to 726 (KIGKS). Position 725 (Lys-725) interacts with ATP.

This sequence belongs to the class-I aminoacyl-tRNA synthetase family.

The protein localises to the cytoplasm. It carries out the reaction tRNA(Leu) + L-leucine + ATP = L-leucyl-tRNA(Leu) + AMP + diphosphate. This is Leucine--tRNA ligase from Mycobacterium sp. (strain JLS).